The sequence spans 201 residues: Dephospho-CoA kinase (201 aa).

One can recognise a DPCK domain in the interval Ser-4–Gln-201. ATP is bound at residue Ala-12–Thr-17.

The protein belongs to the CoaE family.

Its subcellular location is the cytoplasm. The enzyme catalyses 3'-dephospho-CoA + ATP = ADP + CoA + H(+). The protein operates within cofactor biosynthesis; coenzyme A biosynthesis; CoA from (R)-pantothenate: step 5/5. Functionally, catalyzes the phosphorylation of the 3'-hydroxyl group of dephosphocoenzyme A to form coenzyme A. This is Dephospho-CoA kinase from Legionella pneumophila subsp. pneumophila (strain Philadelphia 1 / ATCC 33152 / DSM 7513).